The chain runs to 236 residues: OPEP-2 protein (236 aa).

The protein is OPEP-2 protein (OPEP-2) of Orgyia pseudotsugata (Douglas-fir tussock moth).